Reading from the N-terminus, the 149-residue chain is Calmodulin (149 aa).

Residue alanine 2 is modified to N-acetylalanine. 4 EF-hand domains span residues 8 to 43, 44 to 79, 81 to 116, and 117 to 149; these read EQIAEFKEAFSLFDKDGDGTITTKELGTVMRSLGQN, PTEAELLVMINEVDADGNGTIDFPEFLTMMARKMKD, DSEEEIKEAFKVFDKDGNGYISAAELRHVMTNLGEK, and LSEDEVEEMIREADVDGDGQINYEEFVKMMMSK. Ca(2+) contacts are provided by aspartate 21, aspartate 23, aspartate 25, threonine 27, glutamate 32, aspartate 57, aspartate 59, asparagine 61, threonine 63, glutamate 68, aspartate 94, aspartate 96, asparagine 98, tyrosine 100, glutamate 105, aspartate 130, aspartate 132, aspartate 134, glutamine 136, and glutamate 141.

Belongs to the calmodulin family.

Its function is as follows. Calmodulin mediates the control of a large number of enzymes, ion channels and other proteins by Ca(2+). Among the enzymes to be stimulated by the calmodulin-Ca(2+) complex are a number of protein kinases and phosphatases. This Blastocladiella emersonii (Aquatic fungus) protein is Calmodulin (CMD1).